The following is an 867-amino-acid chain: cGMP-dependent 3',5'-cGMP phosphodiesterase A (867 aa).

The segment covering 121–146 has biased composition (low complexity); it reads IINSSSSTTDTSKTSPIKKQTSSSSP. 2 disordered regions span residues 121-167 and 180-241; these read IINS…SQQQ and HHHH…STFP. The segment covering 147–160 has biased composition (pro residues); sequence PLSPQQQQPPPPLV. Positions 191–220 are enriched in low complexity; that stretch reads NDNNNNTTTNNNNIEILEQQQQQQQQQQQQ. Residues 221-232 show a composition bias toward acidic residues; sequence QDEDSTDVDEEF. The tract at residues 357–503 is phosphodiesterase activity; it reads STTGFVLWIN…GDTCYDPNRI (147 aa). A divalent metal cation is bound by residues histidine 399, histidine 401, and aspartate 403. A nucleoside 3',5'-cyclic phosphate contacts are provided by residues 607–721 and 734–851; these read IFRS…WEMR and VFSR…IFVD.

This sequence belongs to the metallo-beta-lactamase superfamily. cNMP phosphodiesterase family. It depends on Mn(2+) as a cofactor. The cofactor is Mg(2+). Zn(2+) serves as cofactor.

Its subcellular location is the cytoplasm. The protein localises to the cytosol. It catalyses the reaction 3',5'-cyclic GMP + H2O = GMP + H(+). Phosphodiesterase specific for cGMP, which is activated by cGMP but not by cAMP. Involved in the degradation of intracellular cGMP, contributes to the control of cGMP signals. This is cGMP-dependent 3',5'-cGMP phosphodiesterase A (pdeD) from Dictyostelium discoideum (Social amoeba).